The primary structure comprises 666 residues: Chaperone protein dnaK1 (666 aa).

Thr198 bears the Phosphothreonine; by autocatalysis mark.

Belongs to the heat shock protein 70 family.

Functionally, acts as a chaperone. This Prochlorococcus marinus (strain SARG / CCMP1375 / SS120) protein is Chaperone protein dnaK1 (dnaK1).